The primary structure comprises 477 residues: Oxidative stress-induced growth inhibitor 1 (477 aa).

Position 12 is a phosphoserine (serine 12).

Belongs to the OKL38 family. NADPH serves as cofactor. In terms of tissue distribution, ubiquitous. Highest expression in the ovary, testis, kidney, skeletal muscle and liver.

The protein resides in the midbody. In terms of biological role, monooxygenase catalytic activity. Involved in regulation of cytokinesis; promotes RHOA activity, probably acting locally at the midbody in late cytokinesis. Monooxygenase activity is involved in stabilizing transient structures between daughter cells, termed intercellular bridges, before abscission. Regulates differentiation and proliferation through the regulation of cell death. This chain is Oxidative stress-induced growth inhibitor 1, found in Homo sapiens (Human).